We begin with the raw amino-acid sequence, 86 residues long: BolA-like protein 2 (86 aa).

Methionine 1 is modified (N-acetylmethionine).

Belongs to the BolA/IbaG family. In terms of assembly, interacts with GLRX3; forms a heterotrimeric complex composed by two BOLA2 molecules and one GLRX3 molecule; linked by [2Fe-2S] clusters.

It localises to the cytoplasm. The protein localises to the nucleus. Its function is as follows. Acts as a cytosolic iron-sulfur (Fe-S) cluster assembly factor that facilitates [2Fe-2S] cluster insertion into a subset of cytosolic proteins. Acts together with the monothiol glutaredoxin GLRX3. This chain is BolA-like protein 2 (BOLA2), found in Homo sapiens (Human).